The primary structure comprises 394 residues: Acetyl-CoA acetyltransferase (394 aa).

The active-site Acyl-thioester intermediate is C89. Residues H350 and C380 each act as proton acceptor in the active site.

This sequence belongs to the thiolase-like superfamily. Thiolase family. In terms of assembly, homotetramer.

Its subcellular location is the cytoplasm. It catalyses the reaction 2 acetyl-CoA = acetoacetyl-CoA + CoA. Its pathway is biopolymer metabolism; poly-(R)-3-hydroxybutanoate biosynthesis. It functions in the pathway metabolic intermediate biosynthesis; (R)-mevalonate biosynthesis; (R)-mevalonate from acetyl-CoA: step 1/3. The chain is Acetyl-CoA acetyltransferase from Allochromatium vinosum (strain ATCC 17899 / DSM 180 / NBRC 103801 / NCIMB 10441 / D) (Chromatium vinosum).